Here is a 123-residue protein sequence, read N- to C-terminus: Large ribosomal subunit protein bL12 (123 aa).

The protein belongs to the bacterial ribosomal protein bL12 family. Homodimer. Part of the ribosomal stalk of the 50S ribosomal subunit. Forms a multimeric L10(L12)X complex, where L10 forms an elongated spine to which 2 to 4 L12 dimers bind in a sequential fashion. Binds GTP-bound translation factors.

Forms part of the ribosomal stalk which helps the ribosome interact with GTP-bound translation factors. Is thus essential for accurate translation. The chain is Large ribosomal subunit protein bL12 from Clostridium kluyveri (strain NBRC 12016).